The chain runs to 163 residues: Nucleotide-binding protein GTNG_0630 (163 aa).

This sequence belongs to the YajQ family.

Its function is as follows. Nucleotide-binding protein. This is Nucleotide-binding protein GTNG_0630 from Geobacillus thermodenitrificans (strain NG80-2).